The chain runs to 336 residues: Dihydroorotate dehydrogenase (quinone) (336 aa).

Residues 62-66 and Thr-86 contribute to the FMN site; that span reads AGMDK. A substrate-binding site is contributed by Lys-66. Position 111–115 (111–115) interacts with substrate; the sequence is NRMGF. Asn-139 and Asn-172 together coordinate FMN. Position 172 (Asn-172) interacts with substrate. Residue Ser-175 is the Nucleophile of the active site. Asn-177 contributes to the substrate binding site. FMN contacts are provided by Lys-217 and Thr-245. 246 to 247 contacts substrate; it reads NT. FMN-binding positions include Gly-268, Gly-297, and 318–319; that span reads YS.

It belongs to the dihydroorotate dehydrogenase family. Type 2 subfamily. In terms of assembly, monomer. It depends on FMN as a cofactor.

It localises to the cell membrane. The enzyme catalyses (S)-dihydroorotate + a quinone = orotate + a quinol. The protein operates within pyrimidine metabolism; UMP biosynthesis via de novo pathway; orotate from (S)-dihydroorotate (quinone route): step 1/1. Functionally, catalyzes the conversion of dihydroorotate to orotate with quinone as electron acceptor. The sequence is that of Dihydroorotate dehydrogenase (quinone) from Buchnera aphidicola subsp. Schizaphis graminum (strain Sg).